The following is a 259-amino-acid chain: Thiazole synthase (259 aa).

Catalysis depends on lysine 100, which acts as the Schiff-base intermediate with DXP. 1-deoxy-D-xylulose 5-phosphate-binding positions include glycine 161, 187-188 (AG), and 209-210 (AS).

The protein belongs to the ThiG family. As to quaternary structure, homotetramer. Forms heterodimers with either ThiH or ThiS.

The protein localises to the cytoplasm. The enzyme catalyses [ThiS sulfur-carrier protein]-C-terminal-Gly-aminoethanethioate + 2-iminoacetate + 1-deoxy-D-xylulose 5-phosphate = [ThiS sulfur-carrier protein]-C-terminal Gly-Gly + 2-[(2R,5Z)-2-carboxy-4-methylthiazol-5(2H)-ylidene]ethyl phosphate + 2 H2O + H(+). Its pathway is cofactor biosynthesis; thiamine diphosphate biosynthesis. Functionally, catalyzes the rearrangement of 1-deoxy-D-xylulose 5-phosphate (DXP) to produce the thiazole phosphate moiety of thiamine. Sulfur is provided by the thiocarboxylate moiety of the carrier protein ThiS. In vitro, sulfur can be provided by H(2)S. The sequence is that of Thiazole synthase from Salinispora arenicola (strain CNS-205).